A 497-amino-acid chain; its full sequence is Catalase-2 (497 aa).

Active-site residues include H71 and N144. A heme-binding site is contributed by Y354.

It belongs to the catalase family. The cofactor is heme.

It carries out the reaction 2 H2O2 = O2 + 2 H2O. In terms of biological role, catalase involved in the oxidative stress response serving to protect cells from toxicity. For instance plays a role in defending against oxidative damage induced by excessive copper stress. Not required for maintaining normal lifespan. In Caenorhabditis elegans, this protein is Catalase-2.